Reading from the N-terminus, the 190-residue chain is MTETPNTSSEEIQTSEPSPDNELQVLQQENANLKAELQEQNDRYLMALAEAENSRKRLRKERTEMMQYAVENALMDFLPPIESMEKALGFASQTSEEVKNWAIGFQMILQQFKQIFEEKGVVEYSSKGELFNPYLHEAVEIEETTTIPEGTILEEFTKGYKIGDRPIRVAKVKVAKLPAKGNSDSNEEKE.

Over residues 1–18 the composition is skewed to polar residues; that stretch reads MTETPNTSSEEIQTSEPS. The tract at residues 1-21 is disordered; it reads MTETPNTSSEEIQTSEPSPDN.

It belongs to the GrpE family. Homodimer.

The protein localises to the cytoplasm. Functionally, participates actively in the response to hyperosmotic and heat shock by preventing the aggregation of stress-denatured proteins, in association with DnaK and GrpE. It is the nucleotide exchange factor for DnaK and may function as a thermosensor. Unfolded proteins bind initially to DnaJ; upon interaction with the DnaJ-bound protein, DnaK hydrolyzes its bound ATP, resulting in the formation of a stable complex. GrpE releases ADP from DnaK; ATP binding to DnaK triggers the release of the substrate protein, thus completing the reaction cycle. Several rounds of ATP-dependent interactions between DnaJ, DnaK and GrpE are required for fully efficient folding. The protein is Protein GrpE of Chlamydia trachomatis serovar L2b (strain UCH-1/proctitis).